Reading from the N-terminus, the 238-residue chain is ATP synthase subunit a (238 aa).

5 helical membrane passes run 18–38 (LTILAMSLLTITIIFILVFWA), 75–95 (YSLLMFILFSFVFIANNLGLM), 112–132 (NFGVDITLSLLVAFICHIEGI), 179–199 (VVTGLLLQLAVLSPFTGPLAF), and 203–223 (IVWTAFSMFIGFIQAYVFIIL).

Belongs to the ATPase A chain family. In terms of assembly, F-type ATPases have 2 components, CF(1) - the catalytic core - and CF(0) - the membrane proton channel. CF(1) has five subunits: alpha(3), beta(3), gamma(1), delta(1), epsilon(1). CF(0) has three main subunits: a(1), b(2) and c(9-12). The alpha and beta chains form an alternating ring which encloses part of the gamma chain. CF(1) is attached to CF(0) by a central stalk formed by the gamma and epsilon chains, while a peripheral stalk is formed by the delta and b chains.

The protein resides in the cell membrane. Its function is as follows. Key component of the proton channel; it plays a direct role in the translocation of protons across the membrane. The chain is ATP synthase subunit a from Streptococcus agalactiae serotype Ia (strain ATCC 27591 / A909 / CDC SS700).